We begin with the raw amino-acid sequence, 155 residues long: Putative pre-16S rRNA nuclease (155 aa).

It belongs to the YqgF nuclease family.

The protein localises to the cytoplasm. In terms of biological role, could be a nuclease involved in processing of the 5'-end of pre-16S rRNA. This Xanthomonas oryzae pv. oryzae (strain MAFF 311018) protein is Putative pre-16S rRNA nuclease.